Consider the following 807-residue polypeptide: Ribosome biogenesis protein ERB1 (807 aa).

The interval 1–112 is disordered; it reads MMAKNNKTTE…DTTSLTDRLS (112 aa). Composition is skewed to acidic residues over residues 21–30 and 42–56; these read EESDVEEDED and EASE…YESA. Phosphoserine is present on Ser-23. Residues 57-69 show a composition bias toward basic and acidic residues; it reads VEEKESSSDKEAQ. Residues Ser-72 and Ser-76 each carry the phosphoserine modification. The segment covering 86–102 has biased composition (acidic residues); that stretch reads EEEGDEEEDYDSSEFSD. Lys-127 is covalently cross-linked (Glycyl lysine isopeptide (Lys-Gly) (interchain with G-Cter in ubiquitin)). Residues Ser-146 and Ser-149 each carry the phosphoserine modification. The required for interaction with NOP7 stretch occupies residues 265–383; it reads RFVPSKNEAK…LRKVPGYGES (119 aa). The segment at 383–419 is required for interaction with YTM1; it reads SIRERFERSLDLYLAPRVRKNKLNIDPNSLIPELPSP. At Ser-418 the chain carries Phosphoserine. 7 WD repeats span residues 435–474, 483–523, 592–634, 637–675, 678–717, 721–760, and 776–807; these read GHKG…EVYR, NPDD…YDIE, SCKK…TQSP, KSKG…LVKK, PGAR…TPYK, YHEK…DMMK, and INSL…LWTT.

It belongs to the WD repeat BOP1/ERB1 family. As to quaternary structure, component of the NOP7 complex, composed of ERB1, NOP7 and YTM1. The complex is held together by ERB1, which interacts with NOP7 via its N-terminal domain and with YTM1 via a high-affinity interaction between the seven-bladed beta-propeller domains of the 2 proteins. The NOP7 complex associates with the 66S pre-ribosome.

It localises to the nucleus. The protein localises to the nucleolus. Its subcellular location is the nucleoplasm. Functionally, component of the NOP7 complex, which is required for maturation of the 25S and 5.8S ribosomal RNAs and formation of the 60S ribosome. The polypeptide is Ribosome biogenesis protein ERB1 (Saccharomyces cerevisiae (strain YJM789) (Baker's yeast)).